Here is a 510-residue protein sequence, read N- to C-terminus: NAD(P)H-quinone oxidoreductase subunit 2 B, chloroplastic (510 aa).

12 helical membrane passes run 24-44 (LLLF…GLIL), 59-79 (WFYF…LFRW), 99-119 (IFQF…VEYI), 124-144 (MAIT…MFLC), 149-169 (LITI…LSGY), 183-203 (YLLM…WLYG), 229-249 (ISIA…PAPF), 295-315 (WHLL…LLAI), 323-343 (MLAY…IVGD), 354-374 (YMLF…LFGL), 395-415 (ALSL…AGFF), and 418-438 (LYLF…IGLL).

It belongs to the complex I subunit 2 family. NDH is composed of at least 16 different subunits, 5 of which are encoded in the nucleus.

It localises to the plastid. The protein resides in the chloroplast thylakoid membrane. The enzyme catalyses a plastoquinone + NADH + (n+1) H(+)(in) = a plastoquinol + NAD(+) + n H(+)(out). It catalyses the reaction a plastoquinone + NADPH + (n+1) H(+)(in) = a plastoquinol + NADP(+) + n H(+)(out). NDH shuttles electrons from NAD(P)H:plastoquinone, via FMN and iron-sulfur (Fe-S) centers, to quinones in the photosynthetic chain and possibly in a chloroplast respiratory chain. The immediate electron acceptor for the enzyme in this species is believed to be plastoquinone. Couples the redox reaction to proton translocation, and thus conserves the redox energy in a proton gradient. The chain is NAD(P)H-quinone oxidoreductase subunit 2 B, chloroplastic from Agrostis stolonifera (Creeping bentgrass).